The primary structure comprises 463 residues: Alpha-L-arabinofuranosidase B (463 aa).

The first 26 residues, 1–26 (MIPQLNRNYAWAIALGLVARSSLVSA), serve as a signal peptide directing secretion. The tract at residues 27–308 (GPCDIYASGG…ILGIGGHNSK (282 aa)) is catalytic. A disulfide bridge links Cys-29 with Cys-39. Asn-81 is a glycosylation site (N-linked (GlcNAc...) asparagine). 2 disulfides stabilise this stretch: Cys-89–Cys-94 and Cys-184–Cys-185. Residue Asp-227 participates in substrate binding. Glu-229 serves as the catalytic Nucleophile. Asn-230 contributes to the substrate binding site. Asn-280 carries N-linked (GlcNAc...) asparagine glycosylation. Gly-304 serves as a coordination point for substrate. Residues 309 to 463 (LTVGSSISLR…VSWVVSASFA (155 aa)) form an ABD region. An N-linked (GlcNAc...) asparagine glycan is attached at Asn-332. Cysteines 366 and 404 form a disulfide. Residues His-381, Asn-383, Phe-384, His-428, Asp-430, Leu-433, and Asp-453 each contribute to the substrate site.

This sequence belongs to the glycosyl hydrolase 54 family. Residue Asn-280 is mannosylated with up to 7 mannose residues.

Its subcellular location is the secreted. It catalyses the reaction Hydrolysis of terminal non-reducing alpha-L-arabinofuranoside residues in alpha-L-arabinosides.. Its pathway is glycan metabolism; L-arabinan degradation. Its function is as follows. Secreted alpha-L-arabinofuranosidase that actively hydrolyzes p-NP-alpha-L-arabinofuranoside and is specific for furanose configuration of the carbohydrate ring. Also exhibits significant activity against polymeric arabinose-containing substrates such as arabinan and arabinoxylan, a major component of plant hemicellulose. In Penicillium canescens, this protein is Alpha-L-arabinofuranosidase B (abfB).